The sequence spans 363 residues: Phosphoserine aminotransferase (363 aa).

Residue arginine 42 participates in L-glutamate binding. Residues 76–77, tryptophan 102, threonine 156, aspartate 175, and glutamine 198 contribute to the pyridoxal 5'-phosphate site; that span reads GR. Lysine 199 is subject to N6-(pyridoxal phosphate)lysine. Residue 240–241 participates in pyridoxal 5'-phosphate binding; it reads NT.

It belongs to the class-V pyridoxal-phosphate-dependent aminotransferase family. SerC subfamily. As to quaternary structure, homodimer. Pyridoxal 5'-phosphate is required as a cofactor.

The protein resides in the cytoplasm. The enzyme catalyses O-phospho-L-serine + 2-oxoglutarate = 3-phosphooxypyruvate + L-glutamate. It carries out the reaction 4-(phosphooxy)-L-threonine + 2-oxoglutarate = (R)-3-hydroxy-2-oxo-4-phosphooxybutanoate + L-glutamate. It functions in the pathway amino-acid biosynthesis; L-serine biosynthesis; L-serine from 3-phospho-D-glycerate: step 2/3. Its pathway is cofactor biosynthesis; pyridoxine 5'-phosphate biosynthesis; pyridoxine 5'-phosphate from D-erythrose 4-phosphate: step 3/5. Its function is as follows. Catalyzes the reversible conversion of 3-phosphohydroxypyruvate to phosphoserine and of 3-hydroxy-2-oxo-4-phosphonooxybutanoate to phosphohydroxythreonine. The polypeptide is Phosphoserine aminotransferase (Shewanella halifaxensis (strain HAW-EB4)).